Here is an 85-residue protein sequence, read N- to C-terminus: Large ribosomal subunit protein eL43 (85 aa).

The C4-type zinc-finger motif lies at 38-59; sequence CPVCGRKAVRRISTGIWQCQKC.

The protein belongs to the eukaryotic ribosomal protein eL43 family. It depends on Zn(2+) as a cofactor.

The sequence is that of Large ribosomal subunit protein eL43 from Thermococcus sibiricus (strain DSM 12597 / MM 739).